Here is a 1239-residue protein sequence, read N- to C-terminus: DNA-directed RNA polymerase subunit beta (1239 aa).

Positions 1182 to 1239 (IEGAENQLEDKEEKEEEKEENYKEDSDEYDDLREEDVEPDLEELSLDDLDLDDFGDEH) are disordered. Acidic residues-rich tracts occupy residues 1191–1200 (DKEEKEEEKE) and 1206–1239 (DSDEYDDLREEDVEPDLEELSLDDLDLDDFGDEH).

Belongs to the RNA polymerase beta chain family. As to quaternary structure, the RNAP catalytic core consists of 2 alpha, 1 beta, 1 beta' and 1 omega subunit. When a sigma factor is associated with the core the holoenzyme is formed, which can initiate transcription.

It carries out the reaction RNA(n) + a ribonucleoside 5'-triphosphate = RNA(n+1) + diphosphate. In terms of biological role, DNA-dependent RNA polymerase catalyzes the transcription of DNA into RNA using the four ribonucleoside triphosphates as substrates. In Clostridium botulinum (strain Loch Maree / Type A3), this protein is DNA-directed RNA polymerase subunit beta.